Reading from the N-terminus, the 86-residue chain is MTMQGNKLVNLGFGNFVVASRVVSIVDPDSSPMRRLREDARDQGRLIDVTQGRKTRSIIITDSNHVILSAIQTETMGQRFTQEDED.

The protein belongs to the RemA family.

The protein is Putative regulatory protein Dvul_2085 of Nitratidesulfovibrio vulgaris (strain DP4) (Desulfovibrio vulgaris).